The chain runs to 997 residues: DNA polymerase I (997 aa).

The 5'-3' exonuclease domain maps to 174-261 (VMPTQLLDLF…VPCVFSLEDS (88 aa)). One can recognise a 3'-5' exonuclease domain in the interval 428–589 (VPDVSLHTES…LYHYLKLRLE (162 aa)).

It belongs to the DNA polymerase type-A family.

The enzyme catalyses DNA(n) + a 2'-deoxyribonucleoside 5'-triphosphate = DNA(n+1) + diphosphate. Functionally, in addition to polymerase activity, this DNA polymerase exhibits 3'-5' and 5'-3' exonuclease activity. This is DNA polymerase I (polA) from Treponema pallidum (strain Nichols).